The sequence spans 370 residues: Probable pectin lyase E (370 aa).

C75 and C96 form a disulfide bridge. R245 is a catalytic residue. A glycan (N-linked (GlcNAc...) asparagine) is linked at N307. C311 and C319 are oxidised to a cystine.

The protein belongs to the polysaccharide lyase 1 family.

The protein resides in the secreted. It catalyses the reaction Eliminative cleavage of (1-&gt;4)-alpha-D-galacturonan methyl ester to give oligosaccharides with 4-deoxy-6-O-methyl-alpha-D-galact-4-enuronosyl groups at their non-reducing ends.. Its function is as follows. Pectinolytic enzymes consist of four classes of enzymes: pectin lyase, polygalacturonase, pectin methylesterase and rhamnogalacturonase. Among pectinolytic enzymes, pectin lyase is the most important in depolymerization of pectin, since it cleaves internal glycosidic bonds of highly methylated pectins. This chain is Probable pectin lyase E (pelE), found in Aspergillus niger.